The primary structure comprises 336 residues: 4-hydroxy-3-methylbut-2-enyl diphosphate reductase (336 aa).

Cysteine 37 provides a ligand contact to [4Fe-4S] cluster. The (2E)-4-hydroxy-3-methylbut-2-enyl diphosphate site is built by histidine 66 and histidine 99. The dimethylallyl diphosphate site is built by histidine 66 and histidine 99. Residues histidine 66 and histidine 99 each contribute to the isopentenyl diphosphate site. Position 121 (cysteine 121) interacts with [4Fe-4S] cluster. Histidine 149 provides a ligand contact to (2E)-4-hydroxy-3-methylbut-2-enyl diphosphate. Dimethylallyl diphosphate is bound at residue histidine 149. Histidine 149 contributes to the isopentenyl diphosphate binding site. The active-site Proton donor is the glutamate 151. Residue threonine 189 participates in (2E)-4-hydroxy-3-methylbut-2-enyl diphosphate binding. Cysteine 219 provides a ligand contact to [4Fe-4S] cluster. Serine 247, serine 248, asparagine 249, and serine 292 together coordinate (2E)-4-hydroxy-3-methylbut-2-enyl diphosphate. Serine 247, serine 248, asparagine 249, and serine 292 together coordinate dimethylallyl diphosphate. Serine 247, serine 248, asparagine 249, and serine 292 together coordinate isopentenyl diphosphate.

This sequence belongs to the IspH family. [4Fe-4S] cluster serves as cofactor.

It carries out the reaction isopentenyl diphosphate + 2 oxidized [2Fe-2S]-[ferredoxin] + H2O = (2E)-4-hydroxy-3-methylbut-2-enyl diphosphate + 2 reduced [2Fe-2S]-[ferredoxin] + 2 H(+). It catalyses the reaction dimethylallyl diphosphate + 2 oxidized [2Fe-2S]-[ferredoxin] + H2O = (2E)-4-hydroxy-3-methylbut-2-enyl diphosphate + 2 reduced [2Fe-2S]-[ferredoxin] + 2 H(+). It functions in the pathway isoprenoid biosynthesis; dimethylallyl diphosphate biosynthesis; dimethylallyl diphosphate from (2E)-4-hydroxy-3-methylbutenyl diphosphate: step 1/1. Its pathway is isoprenoid biosynthesis; isopentenyl diphosphate biosynthesis via DXP pathway; isopentenyl diphosphate from 1-deoxy-D-xylulose 5-phosphate: step 6/6. Its function is as follows. Catalyzes the conversion of 1-hydroxy-2-methyl-2-(E)-butenyl 4-diphosphate (HMBPP) into a mixture of isopentenyl diphosphate (IPP) and dimethylallyl diphosphate (DMAPP). Acts in the terminal step of the DOXP/MEP pathway for isoprenoid precursor biosynthesis. This chain is 4-hydroxy-3-methylbut-2-enyl diphosphate reductase, found in Rhodococcus jostii (strain RHA1).